The chain runs to 385 residues: FAD-dependent monooxygenase verC2 (385 aa).

The FAD site is built by Arg27, Asp227, and Ala240. N-linked (GlcNAc...) asparagine glycosylation occurs at Asn320. A helical transmembrane segment spans residues Trp365–Ile385.

Belongs to the paxM FAD-dependent monooxygenase family. FAD serves as cofactor.

The protein resides in the membrane. It functions in the pathway secondary metabolite biosynthesis; terpenoid biosynthesis. Its pathway is mycotoxin biosynthesis. FAD-dependent monooxygenase; part of the gene cluster that mediates the biosynthesis of the neurotoxin verrucosidin, a methylated alpha-pyrone polyketide that inhibits oxidative phosphorylation in mitochondria and thereby causes neurological diseases. The carbon backbone of verrucosidin is synthesized by the HR-PKS verA, and further modified by the other verrucodidin cluster enzymes. This Penicillium polonicum protein is FAD-dependent monooxygenase verC2.